The chain runs to 720 residues: Biotin biosynthesis bifunctional protein BioWF (720 aa).

The interval 1-39 (MRFSIKMRASARVSSSPSTSDGSSGDHTESRDRADRHIS) is disordered. The span at 8–23 (RASARVSSSPSTSDGS) shows a compositional bias: low complexity. Over residues 24-39 (SGDHTESRDRADRHIS) the composition is skewed to basic and acidic residues. Arginine 314 lines the substrate pocket. 401–402 (GY) is a binding site for pyridoxal 5'-phosphate. Histidine 439 is a binding site for substrate. Residues serine 488, 513–516 (DDAH), and 564–567 (TASK) contribute to the pyridoxal 5'-phosphate site. Lysine 567 carries the post-translational modification N6-(pyridoxal phosphate)lysine. Substrate is bound at residue threonine 684.

In the N-terminal section; belongs to the BioW family. The protein in the C-terminal section; belongs to the class-II pyridoxal-phosphate-dependent aminotransferase family. BioF subfamily. In terms of assembly, homodimer. Requires Mg(2+) as cofactor. Pyridoxal 5'-phosphate is required as a cofactor.

The enzyme catalyses heptanedioate + ATP + CoA = 6-carboxyhexanoyl-CoA + AMP + diphosphate. It catalyses the reaction 6-carboxyhexanoyl-[ACP] + L-alanine + H(+) = (8S)-8-amino-7-oxononanoate + holo-[ACP] + CO2. The protein operates within metabolic intermediate metabolism; pimeloyl-CoA biosynthesis; pimeloyl-CoA from pimelate: step 1/1. Its pathway is cofactor biosynthesis; biotin biosynthesis. In terms of biological role, catalyzes both the decarboxylative condensation of pimeloyl-[acyl-carrier protein] and L-alanine to produce 8-amino-7-oxononanoate (AON), [acyl-carrier protein], and carbon dioxide, and the transformation of pimelate into pimeloyl-CoA with concomitant hydrolysis of ATP to AMP. The chain is Biotin biosynthesis bifunctional protein BioWF (bioWF) from Corynebacterium kroppenstedtii (strain DSM 44385 / JCM 11950 / CIP 105744 / CCUG 35717).